A 371-amino-acid polypeptide reads, in one-letter code: MKFLDQAKVYIKSGDGGAGSVSFRREKFIEFGGPDGGDGGRGGDVWVEAVNGLNTLIDFRFQQHFKATIGTHGMGRNRAGAKGADVTLKVPVGTQIFEEDEETLICDLTREGQRYRVAAGGNGGFGNAYFKSSVNQAPDWANPGLPGEEKTIWLRLKLIADAGLVGLPNAGKSTFLAAVTRARPKIANYPFTTLHPNLGVATIDGQEFVLADIPGLIEGAHEGVGIGDRFLGHVERTRVLLHLVSAQEEKVGKAYKTVKHELEAYGNELTDKPEIVALSQIDVVDEETLKKKKRELARACGKTPFLISAITGSGMTEVLRALRDIIVEANGGAGQEAPMKALKVRHRDMQSSGNEGESEDNSDRDDEEQQG.

One can recognise an Obg domain in the interval 1–159 (MKFLDQAKVY…KTIWLRLKLI (159 aa)). The OBG-type G domain maps to 160–327 (ADAGLVGLPN…VLRALRDIIV (168 aa)). GTP contacts are provided by residues 166–173 (GLPNAGKS), 191–195 (FTTLH), 212–215 (DIPG), 279–282 (SQID), and 308–310 (SAI). Mg(2+) contacts are provided by S173 and T193. The interval 337 to 371 (APMKALKVRHRDMQSSGNEGESEDNSDRDDEEQQG) is disordered. Positions 356 to 371 (GESEDNSDRDDEEQQG) are enriched in acidic residues.

This sequence belongs to the TRAFAC class OBG-HflX-like GTPase superfamily. OBG GTPase family. As to quaternary structure, monomer. The cofactor is Mg(2+).

Its subcellular location is the cytoplasm. An essential GTPase which binds GTP, GDP and possibly (p)ppGpp with moderate affinity, with high nucleotide exchange rates and a fairly low GTP hydrolysis rate. Plays a role in control of the cell cycle, stress response, ribosome biogenesis and in those bacteria that undergo differentiation, in morphogenesis control. In Rhizobium rhizogenes (strain K84 / ATCC BAA-868) (Agrobacterium radiobacter), this protein is GTPase Obg.